The sequence spans 442 residues: tRNA modification GTPase MnmE (442 aa).

(6S)-5-formyl-5,6,7,8-tetrahydrofolate-binding residues include Arg-24, Glu-82, and Lys-120. Residues 217–367 (GLHIVITGEP…LVSVIKEKVE (151 aa)) enclose the TrmE-type G domain. GTP contacts are provided by residues 227–232 (NVGKST), 246–252 (SEYVGTT), and 271–274 (DTAG). Mg(2+)-binding residues include Ser-231 and Thr-252. Lys-442 contacts (6S)-5-formyl-5,6,7,8-tetrahydrofolate.

It belongs to the TRAFAC class TrmE-Era-EngA-EngB-Septin-like GTPase superfamily. TrmE GTPase family. As to quaternary structure, homodimer. Heterotetramer of two MnmE and two MnmG subunits. The cofactor is K(+).

The protein localises to the cytoplasm. In terms of biological role, exhibits a very high intrinsic GTPase hydrolysis rate. Involved in the addition of a carboxymethylaminomethyl (cmnm) group at the wobble position (U34) of certain tRNAs, forming tRNA-cmnm(5)s(2)U34. This is tRNA modification GTPase MnmE from Wolbachia sp. subsp. Brugia malayi (strain TRS).